Reading from the N-terminus, the 276-residue chain is MTQELNLYIMSDSVGETGLRLAQAVAAQFPNFEAHYVRFPFIHTEEKIYSALDEAKKENALAIMTFVTSGFAQLATHYAKDQGVIAIDVMSPILSGIKSITHEEPNHVPGAVHDLNERYFDRISAMEFAVLYDDGKDPKGFLEADIVLLGVSRTSKTPLSLFLANRNLKVANLPLVPNAHIPEEIWSVDPKKIVGLTTDASVLMEFRRQRMIAYGLNPDTAYSARDQVNQELKFAEDLYKKIGCMVINTAHRSIEETATLILEHMGLDEFDNTETH.

150 to 157 is a binding site for ADP; it reads GVSRTSKT.

Belongs to the pyruvate, phosphate/water dikinase regulatory protein family. PDRP subfamily.

The enzyme catalyses N(tele)-phospho-L-histidyl/L-threonyl-[pyruvate, phosphate dikinase] + ADP = N(tele)-phospho-L-histidyl/O-phospho-L-threonyl-[pyruvate, phosphate dikinase] + AMP + H(+). It catalyses the reaction N(tele)-phospho-L-histidyl/O-phospho-L-threonyl-[pyruvate, phosphate dikinase] + phosphate + H(+) = N(tele)-phospho-L-histidyl/L-threonyl-[pyruvate, phosphate dikinase] + diphosphate. Its function is as follows. Bifunctional serine/threonine kinase and phosphorylase involved in the regulation of the pyruvate, phosphate dikinase (PPDK) by catalyzing its phosphorylation/dephosphorylation. The chain is Putative pyruvate, phosphate dikinase regulatory protein from Lacticaseibacillus casei (strain BL23) (Lactobacillus casei).